We begin with the raw amino-acid sequence, 978 residues long: Transcription factor MYCGRDRAFT_87993 (978 aa).

2 C2H2-type zinc fingers span residues 2–24 and 30–52; these read VFCTYCGQSFTRDEHLERHILTH and FKCFTCHMSFARRDLLQRHYTVH. The zn(2)-C6 fungal-type DNA-binding region spans 79–105; that stretch reads CSNCAKTKTKCDKKFPCSRCAGRNLRC. Disordered regions lie at residues 113–231 and 426–445; these read ASKN…SPRF and THREGRGTSNGSHSPNPSGA. A compositionally biased stretch (low complexity) spans 152 to 165; sequence SSSPSSQKSGTPIS. Residues 432–445 are compositionally biased toward polar residues; it reads GTSNGSHSPNPSGA.

Its subcellular location is the nucleus. Functionally, transcription factor; part of the gene cluster 29 that mediates the biosynthesis of dihydroxynaphthalene (DHN)-melanin, a bluish-green pigment forming a dark layer in the conidial wall that protects the conidia from UV radiations. In Zymoseptoria tritici (strain CBS 115943 / IPO323) (Speckled leaf blotch fungus), this protein is Transcription factor MYCGRDRAFT_87993.